A 365-amino-acid polypeptide reads, in one-letter code: Alanine racemase (365 aa).

K35 functions as the Proton acceptor; specific for D-alanine in the catalytic mechanism. The residue at position 35 (K35) is an N6-(pyridoxal phosphate)lysine. A substrate-binding site is contributed by R130. Y256 acts as the Proton acceptor; specific for L-alanine in catalysis. M304 is a substrate binding site.

The protein belongs to the alanine racemase family. Requires pyridoxal 5'-phosphate as cofactor.

The enzyme catalyses L-alanine = D-alanine. The protein operates within amino-acid biosynthesis; D-alanine biosynthesis; D-alanine from L-alanine: step 1/1. Its function is as follows. Catalyzes the interconversion of L-alanine and D-alanine. May also act on other amino acids. This Polaromonas naphthalenivorans (strain CJ2) protein is Alanine racemase (alr).